Reading from the N-terminus, the 383-residue chain is Succinyl-diaminopimelate desuccinylase (383 aa).

Histidine 72 is a Zn(2+) binding site. The active site involves aspartate 74. Aspartate 105 contacts Zn(2+). Residue glutamate 137 is the Proton acceptor of the active site. Positions 138, 167, and 352 each coordinate Zn(2+).

It belongs to the peptidase M20A family. DapE subfamily. In terms of assembly, homodimer. The cofactor is Zn(2+). Requires Co(2+) as cofactor.

The enzyme catalyses N-succinyl-(2S,6S)-2,6-diaminopimelate + H2O = (2S,6S)-2,6-diaminopimelate + succinate. Its pathway is amino-acid biosynthesis; L-lysine biosynthesis via DAP pathway; LL-2,6-diaminopimelate from (S)-tetrahydrodipicolinate (succinylase route): step 3/3. Functionally, catalyzes the hydrolysis of N-succinyl-L,L-diaminopimelic acid (SDAP), forming succinate and LL-2,6-diaminopimelate (DAP), an intermediate involved in the bacterial biosynthesis of lysine and meso-diaminopimelic acid, an essential component of bacterial cell walls. The polypeptide is Succinyl-diaminopimelate desuccinylase (Ehrlichia ruminantium (strain Gardel)).